The chain runs to 168 residues: Peptide deformylase 2 (168 aa).

Residues C91 and H133 each contribute to the Fe cation site. E134 is an active-site residue. Fe cation is bound at residue H137.

The protein belongs to the polypeptide deformylase family. Fe(2+) serves as cofactor.

The enzyme catalyses N-terminal N-formyl-L-methionyl-[peptide] + H2O = N-terminal L-methionyl-[peptide] + formate. Its function is as follows. Removes the formyl group from the N-terminal Met of newly synthesized proteins. Requires at least a dipeptide for an efficient rate of reaction. N-terminal L-methionine is a prerequisite for activity but the enzyme has broad specificity at other positions. In Vibrio parahaemolyticus serotype O3:K6 (strain RIMD 2210633), this protein is Peptide deformylase 2.